Consider the following 100-residue polypeptide: Urease subunit gamma (100 aa).

It belongs to the urease gamma subunit family. As to quaternary structure, heterotrimer of UreA (gamma), UreB (beta) and UreC (alpha) subunits. Three heterotrimers associate to form the active enzyme. The apoenzyme interacts with an accessory complex composed of UreD, UreF and UreG, which is required for the assembly of the nickel containing metallocenter of UreC. The UreE protein may also play a direct role as a metallochaperone in nickel transfer to the urease apoprotein.

It localises to the cytoplasm. It catalyses the reaction urea + 2 H2O + H(+) = hydrogencarbonate + 2 NH4(+). It functions in the pathway nitrogen metabolism; urea degradation; CO(2) and NH(3) from urea (urease route): step 1/1. With respect to regulation, the apoenzyme can be activated in vitro in the presence of nickel ions and carbon dioxide, which promotes carbamylation of 'Lys-217' of the UreC (alpha) subunit. This chain is Urease subunit gamma, found in Klebsiella aerogenes (Enterobacter aerogenes).